The following is a 484-amino-acid chain: Dynein regulatory complex subunit 2 (484 aa).

2 coiled-coil regions span residues 92–160 (VDCK…RKTI) and 374–403 (KEQE…GMEN).

This sequence belongs to the DRC2 family. Component of the nexin-dynein regulatory complex (N-DRC). Interacts with DRC1.

Its subcellular location is the cytoplasm. The protein resides in the cytoskeleton. It is found in the flagellum basal body. It localises to the cell projection. The protein localises to the cilium. Its subcellular location is the flagellum. The protein resides in the flagellum axoneme. In terms of biological role, component of the nexin-dynein regulatory complex (N-DRC), a key regulator of ciliary/flagellar motility which maintains the alignment and integrity of the distal axoneme and regulates microtubule sliding in motile axonemes. Plays a critical role in the assembly of N-DRC and also stabilizes the assembly of multiple inner dynein arms and radial spokes. Coassembles with DRC1 to form a central scaffold needed for assembly of the N-DRC and its attachment to the outer doublet microtubules. This Macaca fascicularis (Crab-eating macaque) protein is Dynein regulatory complex subunit 2 (CCDC65).